A 494-amino-acid chain; its full sequence is 3-octaprenyl-4-hydroxybenzoate carboxy-lyase (494 aa).

Asparagine 172 contributes to the Mn(2+) binding site. Residues 175 to 177, 189 to 191, and 194 to 195 contribute to the prenylated FMN site; these read IYR, RWL, and RG. Glutamate 238 is a binding site for Mn(2+). Aspartate 294 functions as the Proton donor in the catalytic mechanism.

This sequence belongs to the UbiD family. As to quaternary structure, homohexamer. It depends on prenylated FMN as a cofactor. Requires Mn(2+) as cofactor.

It localises to the cell membrane. It catalyses the reaction a 4-hydroxy-3-(all-trans-polyprenyl)benzoate + H(+) = a 2-(all-trans-polyprenyl)phenol + CO2. Its pathway is cofactor biosynthesis; ubiquinone biosynthesis. Functionally, catalyzes the decarboxylation of 3-octaprenyl-4-hydroxy benzoate to 2-octaprenylphenol, an intermediate step in ubiquinone biosynthesis. The polypeptide is 3-octaprenyl-4-hydroxybenzoate carboxy-lyase (Janthinobacterium sp. (strain Marseille) (Minibacterium massiliensis)).